Consider the following 738-residue polypeptide: MAPSFENLSEQDLHEEEEEEIDFSDLKAQYEVKLEEGLDTFVVIDGLPVVPEENRQKLIKFLLRKLNTVGHTSEDAVFMPLNEKNMSEGFAFVEYETAEQAVAAVKQLHGTPLDKKHTLLVNKLMDIERYGREGRIDEEYKPPNIEPFTEKEHLRSWLGDPNARDQFALYRGDKVGVFWNNKSNPPENVVDRAHWTQLFVQWSPKGTYLASVHPQGVQLWGGPTFSKQKQFPHPFVSLIEFSPGESYLTTWSARPIQVEEGHPVLTYEEDGKNIIVWDIVTGKPLRSFVSHDLAGPESEAQPKKKVQWPAFKWSADEKYVARMLQGQSISIYELPRMNLLGKTSVKIDGVMDFEWSPATVNRDGVKQYEQLLCFWTPEIGSNPARVALMSVPSKEIVRTRNLFNVSDVKLHWQSQGNFVCVKVDRHSKSKKSMATNLEIFRVREKGVPVEVVDSLKDTVINFSWEPNGARFVLITTGDASGAGAPPKTAVSFFAPEKKGVQAGNFKLVRTIEKKTSNAIYWSPKGRFVVVATVHSQSNFDLDFWDMDFEGEKNDNEKDLAANLQLMKTVDHYGVTDIEWDPTGRYVVSGASAWTHQMENGFNLHTFSGETLAENPTDKFKQFLWRPRPPTLLSKEEQKQVRKNLREYSKEFEEEDKYAVDIANTAVVEKRKRVLNEWVAWLKREKELLTEEKEAYGLPEEADQPKAAKDAPTNTEDKGETVVEEIVEEIVEESEEIIG.

Positions 1-10 (MAPSFENLSE) are enriched in polar residues. Residues 1 to 20 (MAPSFENLSEQDLHEEEEEE) are disordered. Residues 40 to 126 (TFVVIDGLPV…HTLLVNKLMD (87 aa)) form the RRM domain. WD repeat units lie at residues 193–230 (AHWTQLFVQWSPKGTYLASVHPQGVQLWGGPTFSKQKQ), 232–289 (PHPF…RSFV), 301–342 (QPKK…LLGK), 454–494 (SLKD…SFFA), 511–554 (IEKK…EKND), and 569–607 (VDHYGVTDIEWDPTGRYVVSGASAWTHQMENGFNLHTFS). A disordered region spans residues 693–720 (EAYGLPEEADQPKAAKDAPTNTEDKGET). A compositionally biased stretch (basic and acidic residues) spans 702–720 (DQPKAAKDAPTNTEDKGET).

The protein belongs to the eIF-3 subunit B family. In terms of assembly, component of the eukaryotic translation initiation factor 3 (eIF-3) complex.

The protein resides in the cytoplasm. Functionally, RNA-binding component of the eukaryotic translation initiation factor 3 (eIF-3) complex, which is involved in protein synthesis of a specialized repertoire of mRNAs and, together with other initiation factors, stimulates binding of mRNA and methionyl-tRNAi to the 40S ribosome. The eIF-3 complex specifically targets and initiates translation of a subset of mRNAs involved in cell proliferation. The sequence is that of Eukaryotic translation initiation factor 3 subunit B (prt1) from Emericella nidulans (strain FGSC A4 / ATCC 38163 / CBS 112.46 / NRRL 194 / M139) (Aspergillus nidulans).